We begin with the raw amino-acid sequence, 425 residues long: L-lysine 2,3-aminomutase (425 aa).

The 213-residue stretch at 113–325 (HRYPDRVLLL…GLRGHTSGYA (213 aa)) folds into the Radical SAM core domain. Cys127, Cys131, and Cys134 together coordinate [4Fe-4S] cluster. Lys339 is modified (N6-(pyridoxal phosphate)lysine).

The protein belongs to the radical SAM superfamily. KamA family. Homotetramer. The cofactor is [4Fe-4S] cluster. Requires pyridoxal 5'-phosphate as cofactor.

The catalysed reaction is L-lysine = (3S)-3,6-diaminohexanoate. It participates in amino-acid degradation; L-lysine degradation via acetate pathway. Catalyzes the interconversion of L-alpha-lysine and L-beta-lysine. The sequence is that of L-lysine 2,3-aminomutase from Fusobacterium nucleatum subsp. nucleatum (strain ATCC 25586 / DSM 15643 / BCRC 10681 / CIP 101130 / JCM 8532 / KCTC 2640 / LMG 13131 / VPI 4355).